We begin with the raw amino-acid sequence, 701 residues long: Elongation factor G (701 aa).

The tr-type G domain maps to 8 to 286 (DRVRNIGIIA…AVVLLLPSPL (279 aa)). GTP-binding positions include 17-24 (AHIDAGKT), 85-89 (DTPGH), and 139-142 (NKMD).

The protein belongs to the TRAFAC class translation factor GTPase superfamily. Classic translation factor GTPase family. EF-G/EF-2 subfamily.

It localises to the cytoplasm. Functionally, catalyzes the GTP-dependent ribosomal translocation step during translation elongation. During this step, the ribosome changes from the pre-translocational (PRE) to the post-translocational (POST) state as the newly formed A-site-bound peptidyl-tRNA and P-site-bound deacylated tRNA move to the P and E sites, respectively. Catalyzes the coordinated movement of the two tRNA molecules, the mRNA and conformational changes in the ribosome. The sequence is that of Elongation factor G from Herpetosiphon aurantiacus (strain ATCC 23779 / DSM 785 / 114-95).